The chain runs to 329 residues: Ceramide synthase hyl-2 (329 aa).

N22 is a glycosylation site (N-linked (GlcNAc...) asparagine). Helical transmembrane passes span 41–61 (VLTGISLIIYRFVFENYIFVP), 95–115 (ALYYTISFVCGLYLVLHESHL), 134–154 (VAWYYWIQGGFYIALVFGILF), 162–182 (FWQMLVHHFITLALIGVSWTM), 187–207 (VGTLILVSHDAVDILIDVGKI), 221–241 (FAGVLFVWVATRLVYYPFWII), and 270–290 (FIMLLLTALLILHIFWAYILF). The region spanning 86–298 (SRMAECAMRA…LFKIAYDTIQ (213 aa)) is the TLC domain.

Belongs to the sphingosine N-acyltransferase family. In terms of tissue distribution, strong expression in the gut, the posterior bulb of the pharynx, the hypoderm, and unidentified cells of the head and the tail.

It localises to the membrane. The enzyme catalyses a very long-chain fatty acyl-CoA + a sphingoid base = an N-(very-long-chain fatty acyl)-sphingoid base + CoA + H(+). It carries out the reaction a fatty acyl-CoA + sphinganine = an N-acylsphinganine + CoA + H(+). It catalyses the reaction docosanoyl-CoA + sphinganine = N-docosanoylsphinganine + CoA + H(+). The catalysed reaction is sphinganine + tetradecanoyl-CoA = N-(tetradecanoyl)-sphinganine + CoA + H(+). The enzyme catalyses eicosanoyl-CoA + sphinganine = N-eicosanoylsphinganine + CoA + H(+). It carries out the reaction 15-methylhexadecasphinganine + a fatty acyl-CoA = an N-acyl-15-methylhexadecasphinganine + CoA + H(+). It participates in lipid metabolism; sphingolipid metabolism. In terms of biological role, catalyzes the acylation of sphingoid bases to form ceramides, which are key players in cell signaling events such as tolerances to heat, oxidation, and ultraviolet stress. C.elegans contain specific sphingoid bases, which are unique or different in structure compared to the sphingoid bases found in other animals. Two examples of these distinctive compounds are: 15-methylhexadecasphinganine and 15-methylhexadecasphing-4-enine. Exhibits substrate preference for long and very long fatty acyl-coA chains (C20-23). Required for adaptation of the nematode to anoxia. Anoxia tolerance may require one or more of the ceramide species that are either specifically or preferentially synthesized by HYL-2, and seems to be affected by a pathway that is parallel to that involving daf-2. The sequence is that of Ceramide synthase hyl-2 (hyl-2) from Caenorhabditis elegans.